We begin with the raw amino-acid sequence, 663 residues long: Nuclear receptor-binding protein homolog (663 aa).

A compositionally biased stretch (low complexity) spans 1 to 14; sequence MSNSQANAGSSGSA. A disordered region spans residues 1–112; the sequence is MSNSQANAGS…SEDESEILEE (112 aa). The segment covering 19 to 46 has biased composition (polar residues); it reads LNPSGSATLVPNLTTTNASSQATPASTI. Composition is skewed to low complexity over residues 47–57 and 81–94; these read PQQQQPQQSQP and VVVAGGSEGVNLDS. The span at 101–111 shows a compositional bias: acidic residues; it reads DDSEDESEILE. A Protein kinase domain is found at 122-392; that stretch reads REEVDQRDVP…ANDLLFHPLL (271 aa). 2 disordered regions span residues 481 to 505 and 638 to 663; these read PNFRSRAASPERADSVKSATPEPVD and YVPQDQQQYQQQQQEADVDQSGTTSN. Phosphoserine occurs at positions 489, 495, and 498. The residue at position 500 (Thr500) is a Phosphothreonine. Residues 641–652 are compositionally biased toward low complexity; sequence QDQQQYQQQQQE.

This sequence belongs to the protein kinase superfamily. Ser/Thr protein kinase family.

Its subcellular location is the cytoplasm. It localises to the cell cortex. In terms of biological role, may play a role in subcellular trafficking between the endoplasmic reticulum and Golgi apparatus. This is Nuclear receptor-binding protein homolog from Drosophila pseudoobscura pseudoobscura (Fruit fly).